A 301-amino-acid polypeptide reads, in one-letter code: Ornithine carbamoyltransferase (301 aa).

Carbamoyl phosphate contacts are provided by residues Arg-100 and 127-130; that span reads HPCQ. Residues Asn-158, Asp-221, and 225-226 each bind L-ornithine; that span reads SM. 2 residues coordinate carbamoyl phosphate: Cys-260 and Arg-288.

Belongs to the aspartate/ornithine carbamoyltransferase superfamily. OTCase family. The enzyme is present as a mixture of trimers and dodecamers, with the relative proportions of the two forms depending on the salt concentration. In addition, the trimeric fraction could reassociate into dodecamers when the salt concentration is increased. It appears that in vivo, the main fraction is in the dodecameric form.

The protein resides in the cytoplasm. It carries out the reaction carbamoyl phosphate + L-ornithine = L-citrulline + phosphate + H(+). Its pathway is amino-acid biosynthesis; L-arginine biosynthesis; L-arginine from L-ornithine and carbamoyl phosphate: step 1/3. Its activity is regulated as follows. Inhibited by excess of arginine and by the bisubstrate delta-N-phosphonoacetyl-L-ornithine (PALO). Reversibly catalyzes the transfer of the carbamoyl group from carbamoyl phosphate (CP) to the N(epsilon) atom of ornithine (ORN) to produce L-citrulline, which is a substrate for argininosuccinate synthetase, the enzyme involved in the final step in arginine biosynthesis. This chain is Ornithine carbamoyltransferase, found in Moritella abyssi.